Reading from the N-terminus, the 294-residue chain is 4-hydroxy-tetrahydrodipicolinate synthase (294 aa).

Thr47 is a binding site for pyruvate. Residue Tyr135 is the Proton donor/acceptor of the active site. The active-site Schiff-base intermediate with substrate is Lys163. Residue Thr205 participates in pyruvate binding.

Belongs to the DapA family. In terms of assembly, homotetramer; dimer of dimers.

It localises to the cytoplasm. It carries out the reaction L-aspartate 4-semialdehyde + pyruvate = (2S,4S)-4-hydroxy-2,3,4,5-tetrahydrodipicolinate + H2O + H(+). Its pathway is amino-acid biosynthesis; L-lysine biosynthesis via DAP pathway; (S)-tetrahydrodipicolinate from L-aspartate: step 3/4. Its function is as follows. Catalyzes the condensation of (S)-aspartate-beta-semialdehyde [(S)-ASA] and pyruvate to 4-hydroxy-tetrahydrodipicolinate (HTPA). This Rickettsia peacockii (strain Rustic) protein is 4-hydroxy-tetrahydrodipicolinate synthase.